We begin with the raw amino-acid sequence, 800 residues long: Phenylalanine--tRNA ligase beta subunit (800 aa).

The 116-residue stretch at 39 to 154 folds into the tRNA-binding domain; sequence TKDIKNLVVG…ESQVPGTDAL (116 aa). In terms of domain architecture, B5 spans 408 to 483; sequence AFITPIDITA…RIYGYDDIPS (76 aa). Mg(2+) contacts are provided by aspartate 461, aspartate 467, glutamate 470, and glutamate 471. The region spanning 708-800 is the FDX-ACB domain; it reads PRFPGMSRDI…ALIEQGAVIR (93 aa).

Belongs to the phenylalanyl-tRNA synthetase beta subunit family. Type 1 subfamily. As to quaternary structure, tetramer of two alpha and two beta subunits. Requires Mg(2+) as cofactor.

The protein localises to the cytoplasm. The catalysed reaction is tRNA(Phe) + L-phenylalanine + ATP = L-phenylalanyl-tRNA(Phe) + AMP + diphosphate + H(+). This chain is Phenylalanine--tRNA ligase beta subunit, found in Staphylococcus aureus (strain Mu50 / ATCC 700699).